Reading from the N-terminus, the 274-residue chain is tRNA (guanine-N(1)-)-methyltransferase (274 aa).

Residues Gly-116 and 140–145 contribute to the S-adenosyl-L-methionine site; that span reads LGDYVL.

It belongs to the RNA methyltransferase TrmD family. Homodimer.

Its subcellular location is the cytoplasm. The catalysed reaction is guanosine(37) in tRNA + S-adenosyl-L-methionine = N(1)-methylguanosine(37) in tRNA + S-adenosyl-L-homocysteine + H(+). Its function is as follows. Specifically methylates guanosine-37 in various tRNAs. The polypeptide is tRNA (guanine-N(1)-)-methyltransferase (Arthrobacter sp. (strain FB24)).